Reading from the N-terminus, the 317-residue chain is Acetyl-coenzyme A carboxylase carboxyl transferase subunit alpha (317 aa).

A CoA carboxyltransferase C-terminal domain is found at 33-294 (NLDDEIARLQ…KQRLLDDLKE (262 aa)).

The protein belongs to the AccA family. In terms of assembly, acetyl-CoA carboxylase is a heterohexamer composed of biotin carboxyl carrier protein (AccB), biotin carboxylase (AccC) and two subunits each of ACCase subunit alpha (AccA) and ACCase subunit beta (AccD).

It is found in the cytoplasm. It carries out the reaction N(6)-carboxybiotinyl-L-lysyl-[protein] + acetyl-CoA = N(6)-biotinyl-L-lysyl-[protein] + malonyl-CoA. Its pathway is lipid metabolism; malonyl-CoA biosynthesis; malonyl-CoA from acetyl-CoA: step 1/1. Its function is as follows. Component of the acetyl coenzyme A carboxylase (ACC) complex. First, biotin carboxylase catalyzes the carboxylation of biotin on its carrier protein (BCCP) and then the CO(2) group is transferred by the carboxyltransferase to acetyl-CoA to form malonyl-CoA. The protein is Acetyl-coenzyme A carboxylase carboxyl transferase subunit alpha of Pasteurella multocida (strain Pm70).